A 170-amino-acid chain; its full sequence is CDP-archaeol synthase (170 aa).

Transmembrane regions (helical) follow at residues 6-26, 53-73, 83-103, 114-134, and 140-160; these read LLWA…PVLV, GLIG…FITP, LLLA…GSFF, PAIG…AYPV, and GQII…NYFA.

It belongs to the CDP-archaeol synthase family. Mg(2+) is required as a cofactor.

The protein resides in the cell membrane. It carries out the reaction 2,3-bis-O-(geranylgeranyl)-sn-glycerol 1-phosphate + CTP + H(+) = CDP-2,3-bis-O-(geranylgeranyl)-sn-glycerol + diphosphate. Its pathway is membrane lipid metabolism; glycerophospholipid metabolism. Functionally, catalyzes the formation of CDP-2,3-bis-(O-geranylgeranyl)-sn-glycerol (CDP-archaeol) from 2,3-bis-(O-geranylgeranyl)-sn-glycerol 1-phosphate (DGGGP) and CTP. This reaction is the third ether-bond-formation step in the biosynthesis of archaeal membrane lipids. This chain is CDP-archaeol synthase, found in Thermococcus onnurineus (strain NA1).